A 383-amino-acid polypeptide reads, in one-letter code: MSVTAAKGFTAAGITAGIKESGSPDLALVVNTGPRRSAAGVFTSNRVKAAPVLWSEQVLKSGEVTAVVLNSGGANACTGPKGFQDTHATAEKAADVLGTGAGEVAVCSTGLIGVLLPMDKLLPGVEAAAGQLSEHGGEKAAIAIKTTDTVHKTSVVTRDGWTVGGMAKGAGMLAPGLATMLVVITTDADLETEALDRALRAATRVTFDRVDSDGCMSTNDTVLLLSSGSSGVTPEYDAFAEAVRTVCDDLGQQLIRDAEGASKDIKVEVVNAATEDEAVQVGRTIARNNLLKCAIHGEDPNWGRVLSAIGTTDAAFEPDRLNVAINGVWVCKNGGVGEDRELVDMRYREVHIVADLAAGDATATIWTNDLTADYVHENSAYSS.

Residues Thr146, Lys168, Thr179, Glu259, Asn378, and Ser383 each coordinate substrate. Residue Thr179 is the Nucleophile of the active site.

The protein belongs to the ArgJ family. Heterotetramer of two alpha and two beta chains.

Its subcellular location is the cytoplasm. It carries out the reaction N(2)-acetyl-L-ornithine + L-glutamate = N-acetyl-L-glutamate + L-ornithine. The enzyme catalyses L-glutamate + acetyl-CoA = N-acetyl-L-glutamate + CoA + H(+). It participates in amino-acid biosynthesis; L-arginine biosynthesis; L-ornithine and N-acetyl-L-glutamate from L-glutamate and N(2)-acetyl-L-ornithine (cyclic): step 1/1. The protein operates within amino-acid biosynthesis; L-arginine biosynthesis; N(2)-acetyl-L-ornithine from L-glutamate: step 1/4. Functionally, catalyzes two activities which are involved in the cyclic version of arginine biosynthesis: the synthesis of N-acetylglutamate from glutamate and acetyl-CoA as the acetyl donor, and of ornithine by transacetylation between N(2)-acetylornithine and glutamate. The chain is Arginine biosynthesis bifunctional protein ArgJ from Streptomyces coelicolor (strain ATCC BAA-471 / A3(2) / M145).